We begin with the raw amino-acid sequence, 288 residues long: 33 kDa chaperonin (288 aa).

2 disulfide bridges follow: Cys236-Cys238 and Cys269-Cys272.

This sequence belongs to the HSP33 family. In terms of processing, under oxidizing conditions two disulfide bonds are formed involving the reactive cysteines. Under reducing conditions zinc is bound to the reactive cysteines and the protein is inactive.

Its subcellular location is the cytoplasm. Functionally, redox regulated molecular chaperone. Protects both thermally unfolding and oxidatively damaged proteins from irreversible aggregation. Plays an important role in the bacterial defense system toward oxidative stress. This is 33 kDa chaperonin from Lactococcus lactis subsp. cremoris (strain SK11).